We begin with the raw amino-acid sequence, 273 residues long: Shikimate dehydrogenase (NADP(+)) (273 aa).

Residues 15 to 17 and threonine 62 each bind shikimate; that span reads SKS. Lysine 66 (proton acceptor) is an active-site residue. Glutamate 78 contributes to the NADP(+) binding site. Residues asparagine 87 and aspartate 103 each contribute to the shikimate site. Residues 127–131, 151–156, and methionine 214 each bind NADP(+); these read GAGGA and NRTHDK. Tyrosine 216 serves as a coordination point for shikimate. Glycine 238 contributes to the NADP(+) binding site.

Belongs to the shikimate dehydrogenase family. In terms of assembly, homodimer.

It catalyses the reaction shikimate + NADP(+) = 3-dehydroshikimate + NADPH + H(+). The protein operates within metabolic intermediate biosynthesis; chorismate biosynthesis; chorismate from D-erythrose 4-phosphate and phosphoenolpyruvate: step 4/7. Its function is as follows. Involved in the biosynthesis of the chorismate, which leads to the biosynthesis of aromatic amino acids. Catalyzes the reversible NADPH linked reduction of 3-dehydroshikimate (DHSA) to yield shikimate (SA). This chain is Shikimate dehydrogenase (NADP(+)), found in Shewanella denitrificans (strain OS217 / ATCC BAA-1090 / DSM 15013).